The chain runs to 225 residues: Uracil-DNA glycosylase (225 aa).

D65 (proton acceptor) is an active-site residue.

It belongs to the uracil-DNA glycosylase (UDG) superfamily. UNG family.

It is found in the cytoplasm. The catalysed reaction is Hydrolyzes single-stranded DNA or mismatched double-stranded DNA and polynucleotides, releasing free uracil.. Functionally, excises uracil residues from the DNA which can arise as a result of misincorporation of dUMP residues by DNA polymerase or due to deamination of cytosine. This Bacillus cytotoxicus (strain DSM 22905 / CIP 110041 / 391-98 / NVH 391-98) protein is Uracil-DNA glycosylase.